The primary structure comprises 1426 residues: ABC transporter G family member 31 (1426 aa).

Residues 142–415 (LRHLRIYRGG…FAGMGFRCPE (274 aa)) enclose the ABC transporter 1 domain. 175–182 (GPPSSGKT) lines the ATP pocket. One can recognise an ABC transmembrane type-2 1 domain in the interval 493–706 (ELLKSNFQWQ…AQNAISVNEF (214 aa)). Transmembrane regions (helical) follow at residues 511–531 (FIYVFKFIQLLLVALITMTVF), 544–564 (GIIYLGALYFAIVMILFNGFT), 592–612 (LPSWLLSIPTSLIESGMWVLV), 630–650 (FLLLFFLHQTSLALFRVMASL), 655–675 (IVANTFGSFALLVVMILGGFI), 681–701 (IPAWWIWGYWISPMMYAQNAI), and 741–761 (IGVGALFGYAIVLNFLFTLFL). The ABC transporter 2 domain maps to 824-1076 (MCFKNINYYV…NLVEFFEAIP (253 aa)). 869–876 (GVSGAGKT) is an ATP binding site. Positions 1149–1363 (AQYAACLWKQ…TLYGLLTSQF (215 aa)) constitute an ABC transmembrane type-2 2 domain. The next 7 helical transmembrane spans lie at 1168–1188 (YTAVRFFYTVIISLMFGTICW), 1200–1220 (IFNAMGAMYAAVLFIGITNAT), 1245–1265 (LPFAFSLVTVEFPYILVQSLI), 1283–1303 (FLWYLFFMYFTLLYFTFYGMM), 1313–1333 (VAPIIAAPFYTLWNLFCGFMI), 1341–1363 (WWRWYYWANPVSWTLYGLLTSQF), and 1398–1418 (VVAGMVAGFCVLFAVVFALAI).

This sequence belongs to the ABC transporter superfamily. ABCG family. PDR (TC 3.A.1.205) subfamily.

It is found in the membrane. In terms of biological role, may be a general defense protein. This Oryza sativa subsp. japonica (Rice) protein is ABC transporter G family member 31.